A 355-amino-acid chain; its full sequence is 3-dehydroquinate synthase (355 aa).

NAD(+) contacts are provided by residues 67-72 (DGEIYK), 101-105 (GVIGD), 125-126 (TT), K138, K147, and 165-168 (FLNT). 3 residues coordinate Zn(2+): E180, H243, and H260.

This sequence belongs to the sugar phosphate cyclases superfamily. Dehydroquinate synthase family. NAD(+) serves as cofactor. The cofactor is Co(2+). Requires Zn(2+) as cofactor.

It localises to the cytoplasm. The enzyme catalyses 7-phospho-2-dehydro-3-deoxy-D-arabino-heptonate = 3-dehydroquinate + phosphate. The protein operates within metabolic intermediate biosynthesis; chorismate biosynthesis; chorismate from D-erythrose 4-phosphate and phosphoenolpyruvate: step 2/7. In terms of biological role, catalyzes the conversion of 3-deoxy-D-arabino-heptulosonate 7-phosphate (DAHP) to dehydroquinate (DHQ). The polypeptide is 3-dehydroquinate synthase (Buchnera aphidicola subsp. Baizongia pistaciae (strain Bp)).